The primary structure comprises 447 residues: Probable glycine dehydrogenase (decarboxylating) subunit 1 (447 aa).

The protein belongs to the GcvP family. N-terminal subunit subfamily. In terms of assembly, the glycine cleavage system is composed of four proteins: P, T, L and H. In this organism, the P 'protein' is a heterodimer of two subunits.

It carries out the reaction N(6)-[(R)-lipoyl]-L-lysyl-[glycine-cleavage complex H protein] + glycine + H(+) = N(6)-[(R)-S(8)-aminomethyldihydrolipoyl]-L-lysyl-[glycine-cleavage complex H protein] + CO2. Its function is as follows. The glycine cleavage system catalyzes the degradation of glycine. The P protein binds the alpha-amino group of glycine through its pyridoxal phosphate cofactor; CO(2) is released and the remaining methylamine moiety is then transferred to the lipoamide cofactor of the H protein. The polypeptide is Probable glycine dehydrogenase (decarboxylating) subunit 1 (Metallosphaera sedula (strain ATCC 51363 / DSM 5348 / JCM 9185 / NBRC 15509 / TH2)).